Here is a 209-residue protein sequence, read N- to C-terminus: Large ribosomal subunit protein uL3 (209 aa).

The disordered stretch occupies residues 128–154; that stretch reads QQRGPMTHGSKFHRAPGSMGASSDPSR.

The protein belongs to the universal ribosomal protein uL3 family. In terms of assembly, part of the 50S ribosomal subunit. Forms a cluster with proteins L14 and L19.

Functionally, one of the primary rRNA binding proteins, it binds directly near the 3'-end of the 23S rRNA, where it nucleates assembly of the 50S subunit. The polypeptide is Large ribosomal subunit protein uL3 (Clostridium beijerinckii (strain ATCC 51743 / NCIMB 8052) (Clostridium acetobutylicum)).